The sequence spans 421 residues: Tyrosine--tRNA ligase (421 aa).

Tyr-35 serves as a coordination point for L-tyrosine. The 'HIGH' region motif lies at 40–49 (PTADSLHIGH). Residues Tyr-170 and Gln-174 each coordinate L-tyrosine. Residues 232–236 (KFGKT) carry the 'KMSKS' region motif. ATP is bound at residue Lys-235. Residues 355 to 421 (LSLVDVLVES…GKKKYFLITY (67 aa)) enclose the S4 RNA-binding domain.

The protein belongs to the class-I aminoacyl-tRNA synthetase family. TyrS type 1 subfamily. As to quaternary structure, homodimer.

The protein localises to the cytoplasm. The enzyme catalyses tRNA(Tyr) + L-tyrosine + ATP = L-tyrosyl-tRNA(Tyr) + AMP + diphosphate + H(+). In terms of biological role, catalyzes the attachment of tyrosine to tRNA(Tyr) in a two-step reaction: tyrosine is first activated by ATP to form Tyr-AMP and then transferred to the acceptor end of tRNA(Tyr). The sequence is that of Tyrosine--tRNA ligase from Bacillus velezensis (strain DSM 23117 / BGSC 10A6 / LMG 26770 / FZB42) (Bacillus amyloliquefaciens subsp. plantarum).